A 477-amino-acid polypeptide reads, in one-letter code: Cyclin-A1-2 (477 aa).

The protein belongs to the cyclin family. Cyclin AB subfamily.

The chain is Cyclin-A1-2 (CYCA1-2) from Oryza sativa subsp. japonica (Rice).